Here is a 475-residue protein sequence, read N- to C-terminus: Glycogen synthase (475 aa).

Lysine 15 serves as a coordination point for ADP-alpha-D-glucose.

It belongs to the glycosyltransferase 1 family. Bacterial/plant glycogen synthase subfamily.

It catalyses the reaction [(1-&gt;4)-alpha-D-glucosyl](n) + ADP-alpha-D-glucose = [(1-&gt;4)-alpha-D-glucosyl](n+1) + ADP + H(+). Its pathway is glycan biosynthesis; glycogen biosynthesis. In terms of biological role, synthesizes alpha-1,4-glucan chains using ADP-glucose. This chain is Glycogen synthase, found in Clostridium kluyveri (strain ATCC 8527 / DSM 555 / NBRC 12016 / NCIMB 10680 / K1).